The sequence spans 218 residues: MIP18 family protein galla-1 (218 aa).

The segment at 1-59 (MLSYIKRKLSESDSGVSSVATVTSSCGGDSGRAGGTGSSESGTGSSSASISGRSQNADE) is disordered. Residues 12 to 27 (SDSGVSSVATVTSSCG) are compositionally biased toward low complexity. The residue at position 14 (S14) is a Phosphoserine. Gly residues predominate over residues 28 to 37 (GDSGRAGGTG). The span at 38 to 54 (SSESGTGSSSASISGRS) shows a compositional bias: low complexity. S65 is modified (phosphoserine).

The protein belongs to the MIP18 family. In terms of assembly, component of the CGX complex composed of crb, galla (galla-1 or galla-2) and Xpd. Interacts with crb (via intracellular domain). Is not able to interact with Xpd in the absence of crb.

Its subcellular location is the apical cell membrane. It localises to the cytoplasm. It is found in the cytoskeleton. The protein localises to the spindle. Component of the crb-galla-Xpd (CGX) complex which is essential for proper mitotic chromosome segregation in early embryos. The CGX complex is also required for cell proliferation in developing wing disks. In the CGX complex, acts with crb to recruit Xpd thus forming the functional complex. The polypeptide is MIP18 family protein galla-1 (Drosophila melanogaster (Fruit fly)).